Reading from the N-terminus, the 272-residue chain is Alkaline ceramidase (272 aa).

The next 2 membrane-spanning stretches (helical) occupy residues 34–54 (FANT…IMLL) and 61–81 (VNGG…ASTY). H83 contributes to the Zn(2+) binding site. 4 helical membrane passes run 96-116 (LSLV…MKWF), 124-144 (LTLV…LCFL), 148-168 (LNAI…NYEG), and 183-203 (ILAL…LCDF). Residues H213 and H217 each coordinate Zn(2+). A helical transmembrane segment spans residues 214–234 (ALFHLLAGLAGYTIFIMFSMI). The N-linked (GlcNAc...) asparagine glycan is linked to N256.

It belongs to the alkaline ceramidase family. Zn(2+) is required as a cofactor.

It localises to the membrane. The catalysed reaction is an N-acyl-sphingoid base + H2O = a sphingoid base + a fatty acid. It carries out the reaction an N-acylsphing-4-enine + H2O = sphing-4-enine + a fatty acid. The enzyme catalyses an N-acyl-15-methylhexadecasphing-4-enine + H2O = 15-methylhexadecasphing-4-enine + a fatty acid. Its pathway is lipid metabolism; sphingolipid metabolism. Functionally, hydrolyzes the sphingolipid ceramide into sphingoid base and free fatty acid. C.elegans contain specific sphingoid bases, which are unique or different in structure compared to the sphingoid bases found in other animals. Two examples of these distinctive compounds are: 15-methylhexadecasphinganine and 15-methylhexadecasphing-4-enine. In Caenorhabditis elegans, this protein is Alkaline ceramidase.